We begin with the raw amino-acid sequence, 469 residues long: Aspartyl/glutamyl-tRNA(Asn/Gln) amidotransferase subunit B (469 aa).

The protein belongs to the GatB/GatE family. GatB subfamily. In terms of assembly, heterotrimer of A, B and C subunits.

The catalysed reaction is L-glutamyl-tRNA(Gln) + L-glutamine + ATP + H2O = L-glutaminyl-tRNA(Gln) + L-glutamate + ADP + phosphate + H(+). It carries out the reaction L-aspartyl-tRNA(Asn) + L-glutamine + ATP + H2O = L-asparaginyl-tRNA(Asn) + L-glutamate + ADP + phosphate + 2 H(+). In terms of biological role, allows the formation of correctly charged Asn-tRNA(Asn) or Gln-tRNA(Gln) through the transamidation of misacylated Asp-tRNA(Asn) or Glu-tRNA(Gln) in organisms which lack either or both of asparaginyl-tRNA or glutaminyl-tRNA synthetases. The reaction takes place in the presence of glutamine and ATP through an activated phospho-Asp-tRNA(Asn) or phospho-Glu-tRNA(Gln). The protein is Aspartyl/glutamyl-tRNA(Asn/Gln) amidotransferase subunit B of Methanococcus maripaludis (strain C5 / ATCC BAA-1333).